We begin with the raw amino-acid sequence, 793 residues long: Methionine--tRNA ligase (793 aa).

The short motif at 11 to 21 (PYVNNFPHLGN) is the 'HIGH' region element. 4 residues coordinate Zn(2+): Cys-142, Cys-145, Cys-155, and Cys-158. The short motif at 334–338 (KFSKS) is the 'KMSKS' region element. An ATP-binding site is contributed by Lys-337. The segment covering 581 to 590 (SQKDRKKSEK) has biased composition (basic and acidic residues). The segment at 581–610 (SQKDRKKSEKGCSACKDSGSSKSDAAASSA) is disordered. The segment covering 591–610 (GCSACKDSGSSKSDAAASSA) has biased composition (low complexity). Positions 622–727 (FSKKIALKTA…PWAAPGTPVI (106 aa)) constitute a tRNA-binding domain.

Belongs to the class-I aminoacyl-tRNA synthetase family. MetG type 1 subfamily. As to quaternary structure, homodimer. It depends on Zn(2+) as a cofactor.

The protein resides in the cytoplasm. It catalyses the reaction tRNA(Met) + L-methionine + ATP = L-methionyl-tRNA(Met) + AMP + diphosphate. Its function is as follows. Is required not only for elongation of protein synthesis but also for the initiation of all mRNA translation through initiator tRNA(fMet) aminoacylation. In Treponema denticola (strain ATCC 35405 / DSM 14222 / CIP 103919 / JCM 8153 / KCTC 15104), this protein is Methionine--tRNA ligase.